We begin with the raw amino-acid sequence, 291 residues long: ATP synthase gamma chain (291 aa).

This sequence belongs to the ATPase gamma chain family. In terms of assembly, F-type ATPases have 2 components, CF(1) - the catalytic core - and CF(0) - the membrane proton channel. CF(1) has five subunits: alpha(3), beta(3), gamma(1), delta(1), epsilon(1). CF(0) has three main subunits: a, b and c.

Its subcellular location is the cell inner membrane. Its function is as follows. Produces ATP from ADP in the presence of a proton gradient across the membrane. The gamma chain is believed to be important in regulating ATPase activity and the flow of protons through the CF(0) complex. The polypeptide is ATP synthase gamma chain (Syntrophus aciditrophicus (strain SB)).